We begin with the raw amino-acid sequence, 278 residues long: Extracellular metalloprotease MCYG_03238 (278 aa).

The signal sequence occupies residues 1 to 19; it reads MRFSIVLSSIAALSSVAAA. N52 carries an N-linked (GlcNAc...) asparagine glycan. Residue H170 participates in Zn(2+) binding. Residue E171 is part of the active site. H174 serves as a coordination point for Zn(2+). C209 and C255 form a disulfide bridge.

This sequence belongs to the peptidase M43B family.

It localises to the secreted. Secreted metalloproteinase that allows assimilation of proteinaceous substrates. Plays a pivotal role as a pathogenicity determinant during infections and contributes to the ability of the pathogen to persist within the mammalian host. The sequence is that of Extracellular metalloprotease MCYG_03238 from Arthroderma otae (strain ATCC MYA-4605 / CBS 113480) (Microsporum canis).